Reading from the N-terminus, the 606-residue chain is Fructan 6-exohydrolase (606 aa).

Residues 1 to 21 (MAPNNGSWLVLSISMMLLSHG) form the signal peptide. An N-linked (GlcNAc...) asparagine glycan is attached at N5. Residue D70 is part of the active site. N-linked (GlcNAc...) asparagine glycosylation is found at N110, N164, N193, N237, and N346. An intrachain disulfide couples C445 to C491. N-linked (GlcNAc...) asparagine glycans are attached at residues N564, N585, N590, and N593.

The protein belongs to the glycosyl hydrolase 32 family.

It catalyses the reaction Hydrolysis of terminal, non-reducing (2-&gt;6)-linked beta-D-fructofuranose residues in fructans.. Its activity is regulated as follows. Not inhibited by sucrose. Hydrolyzes levan-type beta-(2-&gt;6)-linked fructans to fructose, but not inulin-type beta-(2-&gt;1)-linked fructans. This Beta vulgaris (Sugar beet) protein is Fructan 6-exohydrolase.